We begin with the raw amino-acid sequence, 83 residues long: Small ribosomal subunit protein bS16 (83 aa).

It belongs to the bacterial ribosomal protein bS16 family.

The protein is Small ribosomal subunit protein bS16 of Shewanella woodyi (strain ATCC 51908 / MS32).